Here is a 253-residue protein sequence, read N- to C-terminus: Patatin-like phospholipase domain-containing protein 4 (253 aa).

The 171-residue stretch at L6–G176 folds into the PNPLA domain. The GXSXG signature appears at G41–G45. The active-site Nucleophile is the S43. The active-site Proton acceptor is D163. The DGA/G motif lies at D163–G165.

Expressed in all tissues examined, including heart, brain, placenta, lung, liver, muscle, kidney, pancreas and spleen.

The protein localises to the mitochondrion. It catalyses the reaction a triacylglycerol + H2O = a diacylglycerol + a fatty acid + H(+). The catalysed reaction is a 1,2-diacyl-sn-glycero-3-phosphocholine + H2O = a 1-acyl-sn-glycero-3-phosphocholine + a fatty acid + H(+). It carries out the reaction an all-trans-retinyl ester + H2O = all-trans-retinol + a fatty acid + H(+). The enzyme catalyses 2 a 1-acylglycerol = a 1,2-diacylglycerol + glycerol. It catalyses the reaction a 1-acylglycerol + a 1,2-diacylglycerol = a triacylglycerol + glycerol. The catalysed reaction is a 1-acylglycerol + a 1,3-diacylglycerol = a triacylglycerol + glycerol. It carries out the reaction a triacylglycerol + H2O = a 1,2-diacylglycerol + a fatty acid + H(+). The enzyme catalyses a triacylglycerol + H2O = a 1,3-diacylglycerol + a fatty acid + H(+). It catalyses the reaction a triacylglycerol + all-trans-retinol = an all-trans-retinyl ester + a diacylglycerol. The catalysed reaction is 2 1-(9Z-octadecenoyl)-glycerol = 1,2-di-(9Z-octadecenoyl)-glycerol + glycerol. It carries out the reaction 1-(9Z-octadecenoyl)-glycerol + 1,2-di-(9Z-octadecenoyl)-glycerol = 1,2,3-tri-(9Z-octadecenoyl)-glycerol + glycerol. The enzyme catalyses 1-(9Z-octadecenoyl)-glycerol + 1,3-di-(9Z-octadecenoyl)-glycerol = 1,2,3-tri-(9Z-octadecenoyl)-glycerol + glycerol. It catalyses the reaction 1,2-di-(9Z-octadecenoyl)-glycerol + (9Z)-octadecenoate + H(+) = 1,2,3-tri-(9Z-octadecenoyl)-glycerol + H2O. The catalysed reaction is 1,2,3-tri-(9Z-octadecenoyl)-glycerol + H2O = 1,3-di-(9Z-octadecenoyl)-glycerol + (9Z)-octadecenoate + H(+). It carries out the reaction all-trans-retinyl hexadecanoate + H2O = all-trans-retinol + hexadecanoate + H(+). The enzyme catalyses 1,2,3-tri-(9Z-octadecenoyl)-glycerol + all-trans-retinol = all-trans-retinyl 9Z-octadecenoate + di-(9Z)-octadecenoylglycerol. With respect to regulation, the triglyceride lipase activity is inhibited by BEL ((E)-6-(bromomethylene)-3-(1-naphthalenyl)-2H-tetrahydropyran-2-one), a suicide substrate inhibitor. Its function is as follows. Has abundant triacylglycerol lipase activity. Transfers fatty acid from triglyceride to retinol, hydrolyzes retinylesters, and generates 1,3-diacylglycerol from triglycerides. Additionally possesses acylglycerol transacylase and phospholipase A2 activities. The sequence is that of Patatin-like phospholipase domain-containing protein 4 from Homo sapiens (Human).